The following is a 277-amino-acid chain: Energy-coupling factor transporter ATP-binding protein EcfA1 (277 aa).

Positions 5 to 240 (LEVENLVFKY…SEDMVEIGLD (236 aa)) constitute an ABC transporter domain. 40 to 47 (GQNGSGKS) is a binding site for ATP. The active-site Proton acceptor is glutamate 166.

This sequence belongs to the ABC transporter superfamily. Energy-coupling factor EcfA family. Forms a stable energy-coupling factor (ECF) transporter complex composed of 2 membrane-embedded substrate-binding proteins (S component), 2 ATP-binding proteins (A component) and 2 transmembrane proteins (T component). In L.lactis forms a stable complex with EcfA' and EcfT and substrate-binding components. In E.coli forms a stable complex with EcfA', EcfT and individually with 3 tested substrate-binding components (BioY, NiaX and ThiT) with a stoichiometry of 1.1:1:1. The core ECF complex interacts with a number of substrate-specific binding components, including BioY, BioY2, HmpT, NiaX, PanT, QueT, RibU and ThiT.

The protein resides in the cell membrane. Functionally, ATP-binding (A) component of a common energy-coupling factor (ECF) ABC-transporter complex. Unlike classic ABC transporters this ECF transporter provides the energy necessary to transport a number of different substrates. In this organism these probably include biotin, thiamine precursor, niacin, pantothenic acid, queuosine precursor, riboflavin and thiamine. Uptake of niacin or riboflavin into proteosomes containing EcfA1A2T and Niax or RibU has been demonstrated. Uptake requires hydrolyzable Mg-ATP and is substrate-specific; NiaX-containing proteosomes did not transport riboflavin. This chain is Energy-coupling factor transporter ATP-binding protein EcfA1, found in Lactococcus lactis subsp. cremoris (strain MG1363).